Here is a 237-residue protein sequence, read N- to C-terminus: Small ribosomal subunit protein eS4 (237 aa).

In terms of domain architecture, S4 RNA-binding spans 38–110 (LPLAVVVRDV…EAKYYDLKPI (73 aa)).

Belongs to the eukaryotic ribosomal protein eS4 family.

The polypeptide is Small ribosomal subunit protein eS4 (Pyrobaculum calidifontis (strain DSM 21063 / JCM 11548 / VA1)).